We begin with the raw amino-acid sequence, 634 residues long: Threonine--tRNA ligase (634 aa).

The TGS domain maps to 1-61; that stretch reads MINIRFPDGS…NSNCELRLIT (61 aa). Residues 241–532 form a catalytic region; sequence DHRKIGKVLD…LIEHYAGNLP (292 aa). Zn(2+)-binding residues include cysteine 332, histidine 383, and histidine 509.

It belongs to the class-II aminoacyl-tRNA synthetase family. Homodimer. Zn(2+) is required as a cofactor.

It localises to the cytoplasm. The enzyme catalyses tRNA(Thr) + L-threonine + ATP = L-threonyl-tRNA(Thr) + AMP + diphosphate + H(+). Functionally, catalyzes the attachment of threonine to tRNA(Thr) in a two-step reaction: L-threonine is first activated by ATP to form Thr-AMP and then transferred to the acceptor end of tRNA(Thr). Also edits incorrectly charged L-seryl-tRNA(Thr). This chain is Threonine--tRNA ligase, found in Francisella tularensis subsp. holarctica (strain FTNF002-00 / FTA).